The sequence spans 480 residues: RuvB-like helicase 2 (480 aa).

Residue 76–83 coordinates ATP; the sequence is GPPSTGKT.

This sequence belongs to the RuvB family. In terms of assembly, may form heterododecamers with RVB1. Component of the SWR1 chromatin remodeling complex, the INO80 chromatin remodeling complex, and of the R2TP complex.

It localises to the nucleus. It catalyses the reaction ATP + H2O = ADP + phosphate + H(+). Its function is as follows. DNA helicase which participates in several chromatin remodeling complexes, including the SWR1 and the INO80 complexes. The SWR1 complex mediates the ATP-dependent exchange of histone H2A for the H2A variant HZT1 leading to transcriptional regulation of selected genes by chromatin remodeling. The INO80 complex remodels chromatin by shifting nucleosomes and is involved in DNA repair. Also involved in pre-rRNA processing. In Debaryomyces hansenii (strain ATCC 36239 / CBS 767 / BCRC 21394 / JCM 1990 / NBRC 0083 / IGC 2968) (Yeast), this protein is RuvB-like helicase 2 (RVB2).